We begin with the raw amino-acid sequence, 304 residues long: MDQPDIEHINAYLLALQETICAALTAADGGAVFHEDLWQRDEGGGGRTRVLRQGRVFEQAGVNFSRVYGGALPASATAHRPELAGRSYQAMGVSLVVHPENPYIPTSHANVRFFIAEKPGAEPIWWFGGGFDLTPFYGFHEDAVHWHRTAQALCQPFGDTVYPRYKRWCDDYFFLKHRNEARGIGGLFFDDLSAPNFNEAFAFCRAVSQGYLDAYLPIVERRKSHPWGERERQFQLYRRGRYVEFNLVWDRGTLFGLQSGGRTESVLMSMPPLARWQYHYDPAHDSPEAALYRDFLPARDWLKE.

S94 is a binding site for substrate. A divalent metal cation-binding residues include H98 and H108. H108 (proton donor) is an active-site residue. Residue N110–R112 coordinates substrate. 2 residues coordinate a divalent metal cation: H147 and H177. The segment at Y242–Q277 is important for dimerization. G260–R262 provides a ligand contact to substrate.

This sequence belongs to the aerobic coproporphyrinogen-III oxidase family. Homodimer. It depends on a divalent metal cation as a cofactor.

It is found in the cytoplasm. It catalyses the reaction coproporphyrinogen III + O2 + 2 H(+) = protoporphyrinogen IX + 2 CO2 + 2 H2O. It participates in porphyrin-containing compound metabolism; protoporphyrin-IX biosynthesis; protoporphyrinogen-IX from coproporphyrinogen-III (O2 route): step 1/1. Involved in the heme biosynthesis. Catalyzes the aerobic oxidative decarboxylation of propionate groups of rings A and B of coproporphyrinogen-III to yield the vinyl groups in protoporphyrinogen-IX. This chain is Oxygen-dependent coproporphyrinogen-III oxidase, found in Sodalis glossinidius (strain morsitans).